A 51-amino-acid chain; its full sequence is Large ribosomal subunit protein eL39 (51 aa).

Belongs to the eukaryotic ribosomal protein eL39 family.

Binds specifically to a region in 26S rRNA near the subunit interface. The chain is Large ribosomal subunit protein eL39 (rpl39e) from Sulfolobus acidocaldarius (strain ATCC 33909 / DSM 639 / JCM 8929 / NBRC 15157 / NCIMB 11770).